A 146-amino-acid chain; its full sequence is Myoglobin (146 aa).

In terms of domain architecture, Globin spans 2–140; that stretch reads ADLDAVLKCW…VIADLEANYK (139 aa). Histidine 59 contacts nitrite. Histidine 59 serves as a coordination point for O2. Histidine 88 is a binding site for heme b.

This sequence belongs to the globin family. As to quaternary structure, monomeric.

It localises to the cytoplasm. The protein resides in the sarcoplasm. It carries out the reaction Fe(III)-heme b-[protein] + nitric oxide + H2O = Fe(II)-heme b-[protein] + nitrite + 2 H(+). The catalysed reaction is H2O2 + AH2 = A + 2 H2O. Monomeric heme protein which primary function is to store oxygen and facilitate its diffusion within muscle tissues. Reversibly binds oxygen through a pentacoordinated heme iron and enables its timely and efficient release as needed during periods of heightened demand. Depending on the oxidative conditions of tissues and cells, and in addition to its ability to bind oxygen, it also has a nitrite reductase activity whereby it regulates the production of bioactive nitric oxide. Under stress conditions, like hypoxia and anoxia, it also protects cells against reactive oxygen species thanks to its pseudoperoxidase activity. In Katsuwonus pelamis (Skipjack tuna), this protein is Myoglobin (mb).